Here is a 1057-residue protein sequence, read N- to C-terminus: Diacylglycerol kinase iota (1057 aa).

Residues 15 to 59 are compositionally biased toward low complexity; the sequence is AARGPARAPAAAAAAAASPPGPCSGAACAPSAAAGAGAMNPSSSA. Disordered regions lie at residues 15–74 and 334–358; these read AARG…SSGS and LKAS…MEQE. Residues 337 to 352 show a composition bias toward basic residues; sequence SNRKKKRTSFKRKASK. The DAGKc domain occupies 372–507; that stretch reads PLMKPLLVFV…DRWNLHVERN (136 aa). ANK repeat units lie at residues 950–979 and 986–1015; these read DHCS…SELL and TGET…SLRK. Residues 1014 to 1024 show a composition bias toward basic and acidic residues; sequence RKTDSKGKTPQ. A disordered region spans residues 1014-1033; it reads RKTDSKGKTPQERAQQAGDP. Positions 1055–1057 match the PDZ-binding motif; it reads TAV.

This sequence belongs to the eukaryotic diacylglycerol kinase family. In terms of assembly, interacts (via PDZ-binding motif) with DLG4; controls the localization of DGKI to the synapse. Interacts (via PDZ-binding motif) with DLG1. Interacts (via PDZ-binding motif) with DLG2. Interacts (via PDZ-binding motif) with DLG3. May interact with RASGRP3; involved in the regulation of RASGRP3 activity. Specifically expressed in brain and retina. In brain, highly expressed in hippocampus, caudate nucleus, occipital pole, cerebral cortex, and cerebellum. Also detected in kidney.

The protein resides in the cell projection. It localises to the axon. The protein localises to the dendrite. Its subcellular location is the presynapse. It is found in the postsynapse. The protein resides in the postsynaptic density. It localises to the synaptic cell membrane. The protein localises to the cytoplasmic vesicle. Its subcellular location is the secretory vesicle. It is found in the synaptic vesicle membrane. The protein resides in the cytoplasm. It localises to the cytosol. The protein localises to the nucleus. It carries out the reaction a 1,2-diacyl-sn-glycerol + ATP = a 1,2-diacyl-sn-glycero-3-phosphate + ADP + H(+). The catalysed reaction is 1,2-di-(9Z-octadecenoyl)-sn-glycerol + ATP = 1,2-di-(9Z-octadecenoyl)-sn-glycero-3-phosphate + ADP + H(+). The enzyme catalyses 1-octadecanoyl-2-(5Z,8Z,11Z,14Z-eicosatetraenoyl)-sn-glycerol + ATP = 1-octadecanoyl-2-(5Z,8Z,11Z,14Z-eicosatetraenoyl)-sn-glycero-3-phosphate + ADP + H(+). It catalyses the reaction 1-octadecanoyl-2-(9Z,12Z)-octadecadienoyl-sn-glycerol + ATP = 1-octadecanoyl-2-(9Z,12Z-octadecadienoyl)-sn-glycero-3-phosphate + ADP + H(+). It participates in lipid metabolism; glycerolipid metabolism. Its function is as follows. Diacylglycerol kinase that converts diacylglycerol/DAG into phosphatidic acid/phosphatidate/PA and regulates the respective levels of these two bioactive lipids. Thereby, acts as a central switch between the signaling pathways activated by these second messengers with different cellular targets and opposite effects in numerous biological processes. Has probably no preference for any of the diacylglycerols in terms of the acyl chain composition, especially for the acyl chain at the sn-2 position. By controlling the diacylglycerol/DAG-mediated activation of RASGRP3, negatively regulates the Rap1 signaling pathway. May play a role in presynaptic diacylglycerol/DAG signaling and control neurotransmitter release during metabotropic glutamate receptor-dependent long-term depression. The polypeptide is Diacylglycerol kinase iota (Homo sapiens (Human)).